Consider the following 100-residue polypeptide: ATP synthase subunit c (100 aa).

2 consecutive transmembrane segments (helical) span residues 26 to 46 (FSVV…AIGM) and 71 to 91 (MFIA…IALI).

It belongs to the ATPase C chain family. As to quaternary structure, F-type ATPases have 2 components, F(1) - the catalytic core - and F(0) - the membrane proton channel. F(1) has five subunits: alpha(3), beta(3), gamma(1), delta(1), epsilon(1). F(0) has three main subunits: a(1), b(2) and c(10-14). The alpha and beta chains form an alternating ring which encloses part of the gamma chain. F(1) is attached to F(0) by a central stalk formed by the gamma and epsilon chains, while a peripheral stalk is formed by the delta and b chains.

The protein resides in the cell inner membrane. Functionally, f(1)F(0) ATP synthase produces ATP from ADP in the presence of a proton or sodium gradient. F-type ATPases consist of two structural domains, F(1) containing the extramembraneous catalytic core and F(0) containing the membrane proton channel, linked together by a central stalk and a peripheral stalk. During catalysis, ATP synthesis in the catalytic domain of F(1) is coupled via a rotary mechanism of the central stalk subunits to proton translocation. Key component of the F(0) channel; it plays a direct role in translocation across the membrane. A homomeric c-ring of between 10-14 subunits forms the central stalk rotor element with the F(1) delta and epsilon subunits. The polypeptide is ATP synthase subunit c (Campylobacter fetus subsp. fetus (strain 82-40)).